We begin with the raw amino-acid sequence, 184 residues long: ATP synthase subunit b (184 aa).

The chain crosses the membrane as a helical span at residues 4-24 (LSVLFALVASPALAASGPFFS).

It belongs to the ATPase B chain family. F-type ATPases have 2 components, F(1) - the catalytic core - and F(0) - the membrane proton channel. F(1) has five subunits: alpha(3), beta(3), gamma(1), delta(1), epsilon(1). F(0) has three main subunits: a(1), b(2) and c(10-14). The alpha and beta chains form an alternating ring which encloses part of the gamma chain. F(1) is attached to F(0) by a central stalk formed by the gamma and epsilon chains, while a peripheral stalk is formed by the delta and b chains.

Its subcellular location is the cell inner membrane. Functionally, f(1)F(0) ATP synthase produces ATP from ADP in the presence of a proton or sodium gradient. F-type ATPases consist of two structural domains, F(1) containing the extramembraneous catalytic core and F(0) containing the membrane proton channel, linked together by a central stalk and a peripheral stalk. During catalysis, ATP synthesis in the catalytic domain of F(1) is coupled via a rotary mechanism of the central stalk subunits to proton translocation. Component of the F(0) channel, it forms part of the peripheral stalk, linking F(1) to F(0). This Paracoccus denitrificans (strain Pd 1222) protein is ATP synthase subunit b.